The sequence spans 364 residues: Popeye domain-containing protein 2 (364 aa).

N-linked (GlcNAc...) asparagine glycosylation occurs at Asn-4. The next 2 membrane-spanning stretches (helical) occupy residues 37-57 (LLLG…FGFL) and 77-97 (IVLW…HLVY). The tract at residues 276–333 (ADAGPESEKGDEEVCEPAVSPPQATPTSLQQTPPCSTPPATTNFPAPPTRARLSRPDS) is disordered. The span at 300–309 (TPTSLQQTPP) shows a compositional bias: polar residues. Thr-361 carries the post-translational modification Phosphothreonine.

This sequence belongs to the popeye family. Expressed predominantly in the heart and in the skeletal muscle.

The protein localises to the membrane. It localises to the cell membrane. Its subcellular location is the sarcolemma. Functionally, important for the maintenance of cardiac function. Plays a regulatory function in heart rate dynamics mediated, at least in part, through cAMP-binding and, probably, by increasing cell surface expression of the potassium channel KCNK2 and enhancing current density. In Homo sapiens (Human), this protein is Popeye domain-containing protein 2 (POPDC2).